The following is a 411-amino-acid chain: Elongation factor 1-gamma (411 aa).

In terms of domain architecture, GST N-terminal spans 3–84 (LTLWSGVNPE…HIARLDRSGG (82 aa)). The GST C-terminal domain occupies 90–216 (TPLEGSQVDM…QGATFGAREG (127 aa)). Residues 212-265 (GAREGGAKGQGRGCARPGREEAERAAAAADGAEEEDEAPREKKKPNPLDELPPS) are disordered. Residues 214 to 223 (REGGAKGQGR) are compositionally biased toward gly residues. An EF-1-gamma C-terminal domain is found at 255–411 (KPNPLDELPP…RPVLEGRVFK (157 aa)).

As to quaternary structure, EF-1 is composed of four subunits: alpha, beta, delta, and gamma.

Functionally, probably plays a role in anchoring the complex to other cellular components. In Trypanosoma cruzi, this protein is Elongation factor 1-gamma.